Consider the following 789-residue polypeptide: Homocitrate dehydratase, mitochondrial (789 aa).

Residues 1 to 14 (MLSSANRFYIKRHL) constitute a mitochondrion transit peptide. Residues Q96 and 189-191 (DSH) contribute to the substrate site. [4Fe-4S] cluster contacts are provided by C385, C448, and C451. Residues R476, R481, K610, and 672–673 (AR) each bind substrate.

Belongs to the aconitase/IPM isomerase family. [4Fe-4S] cluster serves as cofactor.

The protein localises to the mitochondrion. It catalyses the reaction (2R)-homocitrate = cis-homoaconitate + H2O. The protein operates within amino-acid biosynthesis; L-lysine biosynthesis via AAA pathway; L-alpha-aminoadipate from 2-oxoglutarate: step 2/5. In terms of biological role, catalyzes the reversible dehydration of (R)-homocitrate to cis-homoaconitate, a step in the alpha-aminoadipate pathway for lysine biosynthesis. This is Homocitrate dehydratase, mitochondrial (ACO2) from Saccharomyces cerevisiae (strain ATCC 204508 / S288c) (Baker's yeast).